The primary structure comprises 585 residues: CTP synthase (585 aa).

The segment at 1–281 is amidoligase domain; the sequence is MPALRKHPHT…DAYVVRRLNL (281 aa). S23 serves as a coordination point for CTP. S23 contributes to the UTP binding site. ATP-binding positions include 24 to 29 and D81; that span reads SLGKGL. D81 and E155 together coordinate Mg(2+). CTP contacts are provided by residues 162–164, 202–207, and K238; these read DIE and KTKPTQ. UTP is bound by residues 202-207 and K238; that span reads KTKPTQ. The Glutamine amidotransferase type-1 domain occupies 306-554; it reads RIALVGKYID…VGAAVEYNNG (249 aa). An L-glutamine-binding site is contributed by G369. C396 functions as the Nucleophile; for glutamine hydrolysis in the catalytic mechanism. Residues 397–400, E419, and R480 each bind L-glutamine; that span reads LGLQ. Catalysis depends on residues H527 and E529. The interval 564–585 is disordered; it reads IPTADHQSNGAEHALEDAPARG. The segment covering 576-585 has biased composition (basic and acidic residues); the sequence is HALEDAPARG.

This sequence belongs to the CTP synthase family. As to quaternary structure, homotetramer.

The enzyme catalyses UTP + L-glutamine + ATP + H2O = CTP + L-glutamate + ADP + phosphate + 2 H(+). The catalysed reaction is L-glutamine + H2O = L-glutamate + NH4(+). It carries out the reaction UTP + NH4(+) + ATP = CTP + ADP + phosphate + 2 H(+). Its pathway is pyrimidine metabolism; CTP biosynthesis via de novo pathway; CTP from UDP: step 2/2. Allosterically activated by GTP, when glutamine is the substrate; GTP has no effect on the reaction when ammonia is the substrate. The allosteric effector GTP functions by stabilizing the protein conformation that binds the tetrahedral intermediate(s) formed during glutamine hydrolysis. Inhibited by the product CTP, via allosteric rather than competitive inhibition. Functionally, catalyzes the ATP-dependent amination of UTP to CTP with either L-glutamine or ammonia as the source of nitrogen. Regulates intracellular CTP levels through interactions with the four ribonucleotide triphosphates. The chain is CTP synthase from Mycolicibacterium gilvum (strain PYR-GCK) (Mycobacterium gilvum (strain PYR-GCK)).